The primary structure comprises 239 residues: Leucyl/phenylalanyl-tRNA--protein transferase (239 aa).

The protein belongs to the L/F-transferase family.

It localises to the cytoplasm. The enzyme catalyses N-terminal L-lysyl-[protein] + L-leucyl-tRNA(Leu) = N-terminal L-leucyl-L-lysyl-[protein] + tRNA(Leu) + H(+). The catalysed reaction is N-terminal L-arginyl-[protein] + L-leucyl-tRNA(Leu) = N-terminal L-leucyl-L-arginyl-[protein] + tRNA(Leu) + H(+). It catalyses the reaction L-phenylalanyl-tRNA(Phe) + an N-terminal L-alpha-aminoacyl-[protein] = an N-terminal L-phenylalanyl-L-alpha-aminoacyl-[protein] + tRNA(Phe). Its function is as follows. Functions in the N-end rule pathway of protein degradation where it conjugates Leu, Phe and, less efficiently, Met from aminoacyl-tRNAs to the N-termini of proteins containing an N-terminal arginine or lysine. In Aliivibrio fischeri (strain ATCC 700601 / ES114) (Vibrio fischeri), this protein is Leucyl/phenylalanyl-tRNA--protein transferase.